The following is a 428-amino-acid chain: Glutamyl-tRNA reductase (428 aa).

Residues 49 to 52 (TCNR), serine 109, 114 to 116 (EGQ), and glutamine 120 each bind substrate. Residue cysteine 50 is the Nucleophile of the active site. Residue 189–194 (GAGKMS) participates in NADP(+) binding.

The protein belongs to the glutamyl-tRNA reductase family. As to quaternary structure, homodimer.

It catalyses the reaction (S)-4-amino-5-oxopentanoate + tRNA(Glu) + NADP(+) = L-glutamyl-tRNA(Glu) + NADPH + H(+). It functions in the pathway porphyrin-containing compound metabolism; protoporphyrin-IX biosynthesis; 5-aminolevulinate from L-glutamyl-tRNA(Glu): step 1/2. Its pathway is porphyrin-containing compound metabolism; chlorophyll biosynthesis. Functionally, catalyzes the NADPH-dependent reduction of glutamyl-tRNA(Glu) to glutamate 1-semialdehyde (GSA). This chain is Glutamyl-tRNA reductase, found in Microcystis aeruginosa (strain NIES-843 / IAM M-2473).